The primary structure comprises 264 residues: Small ribosomal subunit protein eS1 (264 aa).

A compositionally biased stretch (basic and acidic residues) spans 236–255; sequence GEGGSGKRGEAGDKSERPEG. Residues 236–264 are disordered; sequence GEGGSGKRGEAGDKSERPEGYEPPVQESV.

It belongs to the eukaryotic ribosomal protein eS1 family. Component of the small ribosomal subunit. Mature ribosomes consist of a small (40S) and a large (60S) subunit. The 40S subunit contains about 33 different proteins and 1 molecule of RNA (18S). The 60S subunit contains about 49 different proteins and 3 molecules of RNA (28S, 5.8S and 5S).

It localises to the cytoplasm. This chain is Small ribosomal subunit protein eS1, found in Spodoptera frugiperda (Fall armyworm).